Reading from the N-terminus, the 48-residue chain is Small polypeptide DEVIL 19 (48 aa).

Residues 13–44 (AFTSKCVSLVKEQRARLYILRRCATMLCCWYI) form a required for DVL/RTFL small polypeptide activity region. A helical transmembrane segment spans residues 25–42 (QRARLYILRRCATMLCCW).

The protein belongs to the DVL/RTFL small polypeptides family.

The protein localises to the cell membrane. Its function is as follows. Small polypeptide acting as a regulatory molecule which coordinates cellular responses required for differentiation, growth and development, probably by restricting polar cell proliferation in lateral organs and coordinating socket cell recruitment and differentiation at trichome sites. The sequence is that of Small polypeptide DEVIL 19 from Arabidopsis thaliana (Mouse-ear cress).